The following is a 436-amino-acid chain: Histidinol dehydrogenase (436 aa).

The substrate site is built by S237, Q259, and H262. Residues Q259 and H262 each contribute to the Zn(2+) site. Active-site proton acceptor residues include E327 and H328. Residues H328, D361, E415, and H420 each contribute to the substrate site. D361 contributes to the Zn(2+) binding site. H420 provides a ligand contact to Zn(2+).

It belongs to the histidinol dehydrogenase family. It depends on Zn(2+) as a cofactor.

It carries out the reaction L-histidinol + 2 NAD(+) + H2O = L-histidine + 2 NADH + 3 H(+). It functions in the pathway amino-acid biosynthesis; L-histidine biosynthesis; L-histidine from 5-phospho-alpha-D-ribose 1-diphosphate: step 9/9. In terms of biological role, catalyzes the sequential NAD-dependent oxidations of L-histidinol to L-histidinaldehyde and then to L-histidine. In Helicobacter hepaticus (strain ATCC 51449 / 3B1), this protein is Histidinol dehydrogenase.